The chain runs to 448 residues: Cysteine--tRNA ligase (448 aa).

C27 is a binding site for Zn(2+). The 'HIGH' region signature appears at 29–39 (PTVYNYIHVGN). Positions 210, 235, and 239 each coordinate Zn(2+). Positions 267 to 271 (KMSKS) match the 'KMSKS' region motif. K270 serves as a coordination point for ATP.

It belongs to the class-I aminoacyl-tRNA synthetase family. As to quaternary structure, monomer. Zn(2+) is required as a cofactor.

Its subcellular location is the cytoplasm. The catalysed reaction is tRNA(Cys) + L-cysteine + ATP = L-cysteinyl-tRNA(Cys) + AMP + diphosphate. This Lactococcus lactis subsp. lactis (strain IL1403) (Streptococcus lactis) protein is Cysteine--tRNA ligase.